A 509-amino-acid chain; its full sequence is ATP synthase subunit beta, mitochondrial (509 aa).

The transit peptide at 1-32 (MVLPRLIPRLSRSAFKVAQANNRVFNAPFRGM) directs the protein to the mitochondrion. 189–196 (GAGVGKTV) provides a ligand contact to ATP.

In terms of assembly, F-type ATP synthases have 2 components, the catalytic core F(1) and the membrane-embedded component F(0), linked together by a central stalk and a peripheral stalk. The central stalk, also called rotor shaft, is often seen as part of F(1). The peripheral stalk is seen as part of F(0). F(0) contains the membrane channel next to the rotor. F-type ATP synthases form dimers but each monomer functions independently in ATP generation. The dimer consists of 17 different polypeptides: ATP1 (subunit alpha, 3 molecules per monomer, part of F(1)), ATP2 (subunit beta, 3 copies per monomer, part of F(1)), ATP3 (subunit gamma, part of the central stalk), ATP4 (subunit b, part of the peripheral stalk), ATP5/OSCP (subunit 5/OSCP, part of the peripheral stalk), ATP6 (subunit a, part of the peripheral stalk), ATP7 (subunit d, part of the peripheral stalk), ATP8 (subunit 8, part of the peripheral stalk), OLI1 (subunit c, part of the rotor, 10 molecules per monomer), ATP14 (subunit h, part of the peripheral stalk), ATP15 (subunit epsilon, part of the central stalk), ATP16 (subunit delta, part of the central stalk), ATP17 (subunit f, part of the peripheral stalk), ATP18 (subunit i/j, part of the peripheral stalk), ATP19 (subunit k, dimer-specific, at interface between monomers), ATP20 (subunit g, at interface between monomers), TIM11 (subunit e, at interface between monomers).

The protein resides in the mitochondrion inner membrane. It carries out the reaction ATP + H2O + 4 H(+)(in) = ADP + phosphate + 5 H(+)(out). Functionally, mitochondrial membrane ATP synthase (F(1)F(0) ATP synthase or Complex V) produces ATP from ADP in the presence of a proton gradient across the membrane which is generated by electron transport complexes of the respiratory chain. F-type ATP synthases consist of two structural domains, F(1) - containing the extramembraneous catalytic core, and F(0) - containing the membrane proton channel, linked together by a central stalk and a peripheral stalk. During catalysis, ATP synthesis in the catalytic domain of F(1) is coupled via a rotary mechanism of the central stalk subunits to proton translocation. Subunits alpha/ATP1 and beta/ATP2 form the catalytic core in F(1). Rotation of the central stalk against the surrounding alpha/ATP1(3)beta/ATP2(3) subunits leads to hydrolysis of ATP in three separate catalytic sites on the beta/ATP2 subunits. In Yarrowia lipolytica (strain CLIB 122 / E 150) (Yeast), this protein is ATP synthase subunit beta, mitochondrial.